The sequence spans 210 residues: Quaternary-amine-specific corrinoid protein (210 aa).

A B12-binding N-terminal domain is found at 1 to 90 (MADWKNLTQA…VLGSGDTAVA (90 aa)). Residues 90 to 210 (AGTILIGTAH…GVKICQAWVG (121 aa)) form the B12-binding domain. His-103 contributes to the methylcob(III)alamin binding site.

It belongs to the methylamine corrinoid protein family. In terms of assembly, the proline betaine:THF methyl transfer system is composed of two methyltransferases, MtpB and MtqA, and the corrinoid protein MtqC. The L-carnitine:THF methyl transfer system is composed of two methyltransferases, MtcB and MtqA, and the corrinoid protein MtqC.

In terms of biological role, involved in the degradation of the quaternary amines L-proline betaine and L-carnitine. Component of a corrinoid-dependent methyltransferase system that transfers a methyl group from L-proline betaine or L-carnitine to tetrahydrofolate (THF), forming methyl-THF, a key intermediate in the Wood-Ljungdahl acetogenesis pathway. Acts as a methyl group carrier between MtpB or MtcB, and MtqA. A methyl group from L-proline betaine or L-carnitine is first transferred to the corrinoid prosthetic group of MtqC by MtpB or MtcB, respectively, and then transferred from MtqC to THF by MtqA. In Eubacterium limosum, this protein is Quaternary-amine-specific corrinoid protein.